A 197-amino-acid polypeptide reads, in one-letter code: Putative glutathione-dependent formaldehyde-activating enzyme (197 aa).

The CENP-V/GFA domain maps to 22–171; that stretch reads FPGGKLYCHC…LKSLGLENYD (150 aa). Positions 29, 31, 50, 52, 55, 97, and 100 each coordinate Zn(2+).

Belongs to the Gfa family. Zn(2+) serves as cofactor.

The enzyme catalyses S-(hydroxymethyl)glutathione = glutathione + formaldehyde. It functions in the pathway one-carbon metabolism; formaldehyde degradation; formate from formaldehyde (glutathione route): step 1/3. Its function is as follows. Catalyzes the condensation of formaldehyde and glutathione to S-hydroxymethylglutathione. The protein is Putative glutathione-dependent formaldehyde-activating enzyme of Emericella nidulans (strain FGSC A4 / ATCC 38163 / CBS 112.46 / NRRL 194 / M139) (Aspergillus nidulans).